Reading from the N-terminus, the 248-residue chain is MKIHVAGFFAGLFGALATLFILLSFGTDYWLLASETCNSHLNSPVTSERGDILVNQVHDPNSEAPNITFHHEGFFWRCTFDDVMNDGNLWKFWFENQPHVRVCKPAYLLPFPFPDQSYNTTSYQTAIIYRGFWSVSMLVGVAAVVAGGFIIICAAPFASHRLYKAGGGLYLISGFFVLVVTAMYVIWIDVLDVISLYTEYQKLNKCADFELNKTYGLSFMFAPVGVFFCFLSGLLFLVIGRTVHHQYN.

Residues 1–26 (MKIHVAGFFAGLFGALATLFILLSFG) form the signal peptide. Residues 27–136 (TDYWLLASET…IIYRGFWSVS (110 aa)) are Extracellular-facing. N-linked (GlcNAc...) asparagine glycosylation is found at Asn66 and Asn119. Residues 137–157 (MLVGVAAVVAGGFIIICAAPF) traverse the membrane as a helical segment. The Cytoplasmic portion of the chain corresponds to 158–167 (ASHRLYKAGG). The helical transmembrane segment at 168–188 (GLYLISGFFVLVVTAMYVIWI) threads the bilayer. Residues 189–218 (DVLDVISLYTEYQKLNKCADFELNKTYGLS) are Extracellular-facing. Asn212 carries an N-linked (GlcNAc...) asparagine glycan. Residues 219–239 (FMFAPVGVFFCFLSGLLFLVI) traverse the membrane as a helical segment. The Cytoplasmic segment spans residues 240-248 (GRTVHHQYN).

Belongs to the TMEM182 family.

The protein localises to the cell membrane. Its function is as follows. May negatively regulate myogenesis and skeletal muscle regeneration. The chain is Transmembrane protein 182 (tmem182a) from Danio rerio (Zebrafish).